Here is a 260-residue protein sequence, read N- to C-terminus: Cytochrome c oxidase subunit 2 (260 aa).

Residues 1-43 are Mitochondrial intermembrane-facing; the sequence is MILRSLSCRFLTIALCDAAEPWQLGFQDAATPMMQGIIDLHHD. Residues 44 to 64 traverse the membrane as a helical segment; sequence IFFFLILILVFVLWMLVRALW. Topologically, residues 65 to 84 are mitochondrial matrix; the sequence is HFNEQTNPIPQRIVHGTTIE. The helical transmembrane segment at 85-105 threads the bilayer; sequence IIWTIFPSVILLFIAIPSFAL. The Mitochondrial intermembrane segment spans residues 106–260; it reads LYSMDGVLVD…VSNQLILQTN (155 aa). Histidine 189, cysteine 224, glutamate 226, cysteine 228, histidine 232, and methionine 235 together coordinate Cu cation. Residue glutamate 226 coordinates Mg(2+).

Belongs to the cytochrome c oxidase subunit 2 family. Component of the cytochrome c oxidase (complex IV, CIV), a multisubunit enzyme composed of a catalytic core of 3 subunits and several supernumerary subunits. The complex exists as a monomer or a dimer and forms supercomplexes (SCs) in the inner mitochondrial membrane with ubiquinol-cytochrome c oxidoreductase (cytochrome b-c1 complex, complex III, CIII). The cofactor is Cu cation.

The protein localises to the mitochondrion inner membrane. It carries out the reaction 4 Fe(II)-[cytochrome c] + O2 + 8 H(+)(in) = 4 Fe(III)-[cytochrome c] + 2 H2O + 4 H(+)(out). Functionally, component of the cytochrome c oxidase, the last enzyme in the mitochondrial electron transport chain which drives oxidative phosphorylation. The respiratory chain contains 3 multisubunit complexes succinate dehydrogenase (complex II, CII), ubiquinol-cytochrome c oxidoreductase (cytochrome b-c1 complex, complex III, CIII) and cytochrome c oxidase (complex IV, CIV), that cooperate to transfer electrons derived from NADH and succinate to molecular oxygen, creating an electrochemical gradient over the inner membrane that drives transmembrane transport and the ATP synthase. Cytochrome c oxidase is the component of the respiratory chain that catalyzes the reduction of oxygen to water. Electrons originating from reduced cytochrome c in the intermembrane space (IMS) are transferred via the dinuclear copper A center (CU(A)) of subunit 2 and heme A of subunit 1 to the active site in subunit 1, a binuclear center (BNC) formed by heme A3 and copper B (CU(B)). The BNC reduces molecular oxygen to 2 water molecules using 4 electrons from cytochrome c in the IMS and 4 protons from the mitochondrial matrix. This Triticum aestivum (Wheat) protein is Cytochrome c oxidase subunit 2 (COX2).